A 335-amino-acid chain; its full sequence is 3-hydroxy-3-methylglutaryl-CoA lyase, cytoplasmic (335 aa).

Gly2 carries the N-myristoyl glycine lipid modification. Residues Val43–Met310 enclose the Pyruvate carboxyltransferase domain. Arg51 is a binding site for substrate. Position 52 (Asp52) interacts with a divalent metal cation. Lys58 bears the N6-acetyllysine mark. A divalent metal cation contacts are provided by His243 and His245. Residue Cys276 is part of the active site. Residue Asn285 participates in a divalent metal cation binding.

This sequence belongs to the HMG-CoA lyase family. It depends on a divalent metal cation as a cofactor.

The protein resides in the cytoplasm. The protein localises to the cytosol. It is found in the endoplasmic reticulum membrane. The catalysed reaction is (3S)-3-hydroxy-3-methylglutaryl-CoA = acetoacetate + acetyl-CoA. The protein operates within metabolic intermediate metabolism; (S)-3-hydroxy-3-methylglutaryl-CoA degradation; acetoacetate from (S)-3-hydroxy-3-methylglutaryl-CoA: step 1/1. Non-mitochondrial 3-hydroxy-3-methylglutaryl-CoA lyase that catalyzes a cation-dependent cleavage of (S)-3-hydroxy-3-methylglutaryl-CoA into acetyl-CoA and acetoacetate, a key step in ketogenesis, the products of which support energy production in nonhepatic animal tissues. This chain is 3-hydroxy-3-methylglutaryl-CoA lyase, cytoplasmic (hmgcll1), found in Danio rerio (Zebrafish).